The chain runs to 508 residues: Serine carboxypeptidase 3 (508 aa).

The N-terminal stretch at 1 to 19 (MVTTPRLVSLLLLLALCAA) is a signal peptide. Residues 20–80 (AAGALRLPPD…PGQLLERRVT (61 aa)) constitute a propeptide that is removed on maturation. Residues 48-67 (PKDSSSSSGRHGARVGEGNE) form a disordered region. The residue at position 81 (Leu-81) is a Blocked amino end (Leu). Intrachain disulfides connect Cys-133/Cys-373, Cys-301/Cys-316, and Cys-339/Cys-344. Residue Asn-151 is glycosylated (N-linked (GlcNAc...) asparagine). Ser-223 is an active-site residue. Asp-411 is an active-site residue. Cys-414 contacts substrate. His-468 is an active-site residue. Residues 492–508 (EAVPEEESSTTSFYAAM) constitute a propeptide that is removed on maturation.

This sequence belongs to the peptidase S10 family. In terms of assembly, monomer.

The protein resides in the secreted. It catalyses the reaction Release of a C-terminal amino acid with broad specificity.. Inhibited by mercuric ions. In Hordeum vulgare (Barley), this protein is Serine carboxypeptidase 3 (CBP3).